Reading from the N-terminus, the 334-residue chain is Putative heme-binding peroxidase (334 aa).

The Proton acceptor role is filled by histidine 40. Histidine 169 is a binding site for heme b. Tryptophan 185 serves as the catalytic Tryptophan radical intermediate.

Belongs to the peroxidase family. Cytochrome c peroxidase subfamily. The cofactor is heme b.

Its function is as follows. Destroys radicals which are normally produced within the cells and which are toxic to biological systems. The sequence is that of Putative heme-binding peroxidase from Cryptococcus neoformans var. neoformans serotype D (strain JEC21 / ATCC MYA-565) (Filobasidiella neoformans).